The following is a 270-amino-acid chain: 3-methyl-2-oxobutanoate hydroxymethyltransferase (270 aa).

2 residues coordinate Mg(2+): D43 and D82. 3-methyl-2-oxobutanoate contacts are provided by residues 43–44, D82, and K110; that span reads DS. Residue E112 coordinates Mg(2+). The Proton acceptor role is filled by E179.

Belongs to the PanB family. In terms of assembly, homodecamer; pentamer of dimers. It depends on Mg(2+) as a cofactor.

Its subcellular location is the cytoplasm. The enzyme catalyses 3-methyl-2-oxobutanoate + (6R)-5,10-methylene-5,6,7,8-tetrahydrofolate + H2O = 2-dehydropantoate + (6S)-5,6,7,8-tetrahydrofolate. Its pathway is cofactor biosynthesis; (R)-pantothenate biosynthesis; (R)-pantoate from 3-methyl-2-oxobutanoate: step 1/2. In terms of biological role, catalyzes the reversible reaction in which hydroxymethyl group from 5,10-methylenetetrahydrofolate is transferred onto alpha-ketoisovalerate to form ketopantoate. The protein is 3-methyl-2-oxobutanoate hydroxymethyltransferase of Psychrobacter sp. (strain PRwf-1).